Reading from the N-terminus, the 628-residue chain is Otolith matrix protein OMM-64 (628 aa).

A signal peptide spans 1 to 20; sequence MLSRLLIVPLIFALAGLAIS. Positions 43–628 are disordered; that stretch reads KGDKDGGGLT…AAATALAAQS (586 aa). Residues 78-93 show a composition bias toward low complexity; sequence DSSPDTTDTPDASSSD. Residues 182–214 show a composition bias toward polar residues; the sequence is TESPGSDSAESPGSDSAESPGSDSTESPGSDST. Composition is skewed to basic and acidic residues over residues 246-266, 276-285, and 311-343; these read ETDK…ATDK, ELDGKAHAED, and RPEK…RDSA. Asn-318 is a glycosylation site (N-linked (GlcNAc...) asparagine). Composition is skewed to acidic residues over residues 449 to 462, 477 to 489, 514 to 536, 544 to 556, and 565 to 578; these read DSQE…EAEP, EPQE…DTDD, DKED…MDKD, DSVD…DAEP, and DEID…PDSE. Residues 613–628 show a composition bias toward low complexity; it reads ASQAADAAATALAAQS.

As to expression, specifically expressed in otolith matrix-producing cells.

The protein resides in the secreted. Its subcellular location is the extracellular space. The protein localises to the extracellular matrix. Calcium-binding component of otoliths, a calcium carbonate structure of the inner ear involved in hearing and balance sensing. Binds calcium. The chain is Otolith matrix protein OMM-64 from Oncorhynchus mykiss (Rainbow trout).